Here is a 435-residue protein sequence, read N- to C-terminus: Putative F-box/kelch-repeat protein At1g13200 (435 aa).

Residues 1–29 form a disordered region; it reads MKDAEKREVIASSSLQRKRNRGRRLRKRR. The span at 16-29 shows a compositional bias: basic residues; it reads QRKRNRGRRLRKRR. Residues 37–82 form the F-box domain; the sequence is LMVPSSLPNDVLEEIFLRFPVKALIRLKSLSKQWRSTIESRSFEER. 4 Kelch repeats span residues 164–217, 224–270, 273–317, and 322–368; these read SVYV…DYKL, DKYI…PASA, SVYW…HIDM, and NSLC…EKRD.

In Arabidopsis thaliana (Mouse-ear cress), this protein is Putative F-box/kelch-repeat protein At1g13200.